The primary structure comprises 66 residues: LYR motif-containing protein PHYPADRAFT_186863 (66 aa).

It belongs to the complex I LYR family. LYRM9 subfamily.

The chain is LYR motif-containing protein PHYPADRAFT_186863 from Physcomitrium patens (Spreading-leaved earth moss).